Here is a 548-residue protein sequence, read N- to C-terminus: Rhotekin (548 aa).

Residues 10-85 form the REM-1 domain; the sequence is DLNMLYIRQM…LQRRKEAQVL (76 aa). Phosphoserine occurs at positions 22 and 93. The disordered stretch occupies residues 83–103; that stretch reads QVLGKTGRRPSDSVQPPERSP. Asymmetric dimethylarginine is present on Arg-217. Phosphoserine is present on Ser-219. The region spanning 296-403 is the PH domain; sequence QPTASGTLRV…WMEALWQLFL (108 aa). 3 positions are modified to phosphoserine: Ser-504, Ser-513, and Ser-528. The interval 506–548 is disordered; sequence DAVPADHSLGPSRSVAPLPPQRSPQSRGFYSKSQLSTWLQSPV. A compositionally biased stretch (polar residues) spans 528 to 548; it reads SPQSRGFYSKSQLSTWLQSPV.

In terms of assembly, interacts via its C-terminal region with the TAX1BP3 PDZ domain. This interaction facilitates Rho-mediated activation of the c-Fos serum response element (SRE). Interacts with SEPT9. Specifically binds to GTP-bound RHOA, RHOB and RHOC and inhibits their GTPase activity.

Its function is as follows. Mediates Rho signaling to activate NF-kappa-B and may confer increased resistance to apoptosis to cells in gastric tumorigenesis. May play a novel role in the organization of septin structures. In Rattus norvegicus (Rat), this protein is Rhotekin.